Consider the following 344-residue polypeptide: Axoneme-associated protein mst101(1) (344 aa).

Repeat copies occupy residues 74-89, 90-105, 106-121, 122-137, 138-153, 154-169, 170-185, 186-201, 202-217, 218-233, 234-249, and 250-265. The tract at residues 74–344 is 17 X 16 AA approximate tandem repeats of K-K-K-C-X-E-X-A-[KQ]-K-X-X-E-X-A-X; that stretch reads KKKCAEAAKK…AAQKKCEPKK (271 aa). A disordered region spans residues 206 to 244; that stretch reads KEAAEKKKCEERAKKEKEAAEKKKCEERAKKEKEAAEKK. One copy of the 13; approximate repeat lies at 266-281; the sequence is AQKKKCAELAKKAKEA. A 14; approximate repeat occupies 282 to 297; sequence AEKKKCAKKAGEKGSK. Over residues 285-315 the composition is skewed to basic and acidic residues; the sequence is KKCAKKAGEKGSKQSGSDKGKKNGKKNDMKN. The tract at residues 285 to 318 is disordered; it reads KKCAKKAGEKGSKQSGSDKGKKNGKKNDMKNKCA. The stretch at 298 to 313 is one 15; approximate repeat; sequence QSGSDKGKKNGKKNDM. Repeat unit 16 spans residues 314-329; the sequence is KNKCAMLAKKAKEEAL. Residues 330 to 344 form a 17; truncated repeat; the sequence is KKKCAAAQKKCEPKK.

As to expression, testis. Located in spermatocytes and spermatid bundles.

Its subcellular location is the cytoplasm. In terms of biological role, possible structural role in the sperm tail. It is associated with axonemal structures. The protein is Axoneme-associated protein mst101(1) (mst101(1)) of Drosophila hydei (Fruit fly).